The sequence spans 498 residues: Glycerol kinase 1 (498 aa).

Residue Thr12 coordinates ADP. 3 residues coordinate ATP: Thr12, Thr13, and Ser14. Thr12 serves as a coordination point for sn-glycerol 3-phosphate. Arg16 lines the ADP pocket. The sn-glycerol 3-phosphate site is built by Arg82, Glu83, Tyr134, and Asp243. Glycerol contacts are provided by Arg82, Glu83, Tyr134, Asp243, and Gln244. Residues Thr265 and Gly308 each contribute to the ADP site. Residues Thr265, Gly308, Gln312, and Gly409 each coordinate ATP. 2 residues coordinate ADP: Gly409 and Asn413.

Belongs to the FGGY kinase family. As to quaternary structure, homotetramer and homodimer (in equilibrium).

The catalysed reaction is glycerol + ATP = sn-glycerol 3-phosphate + ADP + H(+). The protein operates within polyol metabolism; glycerol degradation via glycerol kinase pathway; sn-glycerol 3-phosphate from glycerol: step 1/1. Its activity is regulated as follows. Activated by phosphorylation and inhibited by fructose 1,6-bisphosphate (FBP). Functionally, key enzyme in the regulation of glycerol uptake and metabolism. Catalyzes the phosphorylation of glycerol to yield sn-glycerol 3-phosphate. This chain is Glycerol kinase 1, found in Clostridium tetani (strain Massachusetts / E88).